The primary structure comprises 322 residues: Protein SEC13 homolog (322 aa).

Val2 is modified (N-acetylvaline). 6 WD repeats span residues 11–50 (SHED…QILI), 55–96 (GHEG…WEKS), 101–144 (GHDS…EVKK), 148–204 (AHTI…QWKE), 210–253 (AHSD…SNTW), and 260–299 (KFND…QWVC). Ser184 is subject to Phosphoserine. Ser309 bears the Phosphoserine mark.

This sequence belongs to the WD repeat SEC13 family. In terms of assembly, at the nuclear pore: component of the Y-shaped Nup107-160 subcomplex of the nuclear pore complex (NPC). The Nup107-160 subcomplex includes NUP160, NUP133, NUP107, NUP98, NUP85, NUP43, NUP37, SEH1 and SEC13. At the COPII coat complex: interacts with SEC31A and SEC31B. Interacts with SEC16A. Interacts with SEC16B. Component of the GATOR2 subcomplex, composed of MIOS, SEC13, SEH1L, WDR24 and WDR59. The GATOR2 complex interacts with CASTOR1 and CASTOR2; the interaction is negatively regulated by arginine. The GATOR2 complex interacts with SESN1, SESN2 and SESN3; the interaction is negatively regulated by amino acids.

Its subcellular location is the cytoplasmic vesicle. The protein localises to the COPII-coated vesicle membrane. It localises to the endoplasmic reticulum membrane. It is found in the nucleus. The protein resides in the nuclear pore complex. Its subcellular location is the lysosome membrane. Its activity is regulated as follows. The GATOR2 complex is negatively regulated by the upstream amino acid sensors CASTOR1 and SESN2, which sequester the GATOR2 complex in absence of amino acids. In the presence of abundant amino acids, GATOR2 is released from CASTOR1 and SESN2 and activated. Its function is as follows. Functions as a component of the nuclear pore complex (NPC) and the COPII coat. At the endoplasmic reticulum, SEC13 is involved in the biogenesis of COPII-coated vesicles. Required for the exit of adipsin (CFD/ADN), an adipocyte-secreted protein from the endoplasmic reticulum. In terms of biological role, as a component of the GATOR2 complex, functions as an activator of the amino acid-sensing branch of the mTORC1 signaling pathway. The GATOR2 complex indirectly activates mTORC1 through the inhibition of the GATOR1 subcomplex. GATOR2 probably acts as an E3 ubiquitin-protein ligase toward GATOR1. In the presence of abundant amino acids, the GATOR2 complex mediates ubiquitination of the NPRL2 core component of the GATOR1 complex, leading to GATOR1 inactivation. In the absence of amino acids, GATOR2 is inhibited, activating the GATOR1 complex. Within the GATOR2 complex, SEC13 and SEH1L are required to stabilize the complex. In Homo sapiens (Human), this protein is Protein SEC13 homolog.